The primary structure comprises 235 residues: Purine nucleoside phosphorylase DeoD-type (235 aa).

H4 contacts a purine D-ribonucleoside. Residues G20, R24, R43, and 87-90 contribute to the phosphate site; that span reads RVGT. Residues 179-181 and 203-204 each bind a purine D-ribonucleoside; these read EME and SD. D204 functions as the Proton donor in the catalytic mechanism.

Belongs to the PNP/UDP phosphorylase family. As to quaternary structure, homohexamer; trimer of homodimers.

The enzyme catalyses a purine D-ribonucleoside + phosphate = a purine nucleobase + alpha-D-ribose 1-phosphate. It catalyses the reaction a purine 2'-deoxy-D-ribonucleoside + phosphate = a purine nucleobase + 2-deoxy-alpha-D-ribose 1-phosphate. Functionally, catalyzes the reversible phosphorolytic breakdown of the N-glycosidic bond in the beta-(deoxy)ribonucleoside molecules, with the formation of the corresponding free purine bases and pentose-1-phosphate. This chain is Purine nucleoside phosphorylase DeoD-type, found in Clostridium perfringens (strain ATCC 13124 / DSM 756 / JCM 1290 / NCIMB 6125 / NCTC 8237 / Type A).